Consider the following 424-residue polypeptide: Kynureninase (424 aa).

Residues L109, T110, 137 to 140 (FPSD), D222, H225, and Y247 contribute to the pyridoxal 5'-phosphate site. N6-(pyridoxal phosphate)lysine is present on K248. Pyridoxal 5'-phosphate is bound by residues W278 and N306.

The protein belongs to the kynureninase family. Homodimer. Pyridoxal 5'-phosphate serves as cofactor.

The catalysed reaction is L-kynurenine + H2O = anthranilate + L-alanine + H(+). It carries out the reaction 3-hydroxy-L-kynurenine + H2O = 3-hydroxyanthranilate + L-alanine + H(+). It functions in the pathway amino-acid degradation; L-kynurenine degradation; L-alanine and anthranilate from L-kynurenine: step 1/1. It participates in cofactor biosynthesis; NAD(+) biosynthesis; quinolinate from L-kynurenine: step 2/3. In terms of biological role, catalyzes the cleavage of L-kynurenine (L-Kyn) and L-3-hydroxykynurenine (L-3OHKyn) into anthranilic acid (AA) and 3-hydroxyanthranilic acid (3-OHAA), respectively. This is Kynureninase from Koribacter versatilis (strain Ellin345).